A 290-amino-acid polypeptide reads, in one-letter code: Phosphatidylserine decarboxylase proenzyme (290 aa).

Residues Asp96, His153, and Ser257 each act as charge relay system; for autoendoproteolytic cleavage activity in the active site. The Schiff-base intermediate with substrate; via pyruvic acid; for decarboxylase activity role is filled by Ser257. A Pyruvic acid (Ser); by autocatalysis modification is found at Ser257.

The protein belongs to the phosphatidylserine decarboxylase family. PSD-B subfamily. Prokaryotic type I sub-subfamily. Heterodimer of a large membrane-associated beta subunit and a small pyruvoyl-containing alpha subunit. Pyruvate is required as a cofactor. In terms of processing, is synthesized initially as an inactive proenzyme. Formation of the active enzyme involves a self-maturation process in which the active site pyruvoyl group is generated from an internal serine residue via an autocatalytic post-translational modification. Two non-identical subunits are generated from the proenzyme in this reaction, and the pyruvate is formed at the N-terminus of the alpha chain, which is derived from the carboxyl end of the proenzyme. The autoendoproteolytic cleavage occurs by a canonical serine protease mechanism, in which the side chain hydroxyl group of the serine supplies its oxygen atom to form the C-terminus of the beta chain, while the remainder of the serine residue undergoes an oxidative deamination to produce ammonia and the pyruvoyl prosthetic group on the alpha chain. During this reaction, the Ser that is part of the protease active site of the proenzyme becomes the pyruvoyl prosthetic group, which constitutes an essential element of the active site of the mature decarboxylase.

The protein resides in the cell membrane. It catalyses the reaction a 1,2-diacyl-sn-glycero-3-phospho-L-serine + H(+) = a 1,2-diacyl-sn-glycero-3-phosphoethanolamine + CO2. It participates in phospholipid metabolism; phosphatidylethanolamine biosynthesis; phosphatidylethanolamine from CDP-diacylglycerol: step 2/2. In terms of biological role, catalyzes the formation of phosphatidylethanolamine (PtdEtn) from phosphatidylserine (PtdSer). In Haemophilus influenzae (strain 86-028NP), this protein is Phosphatidylserine decarboxylase proenzyme.